The primary structure comprises 450 residues: MKMLVKQIYENAKELDKSKIKIKGWVVTSRGNKKIQFIELNDGSSVLHLQLVLKSEKMDLNDIHFKTGSSIKAEGILNYTPKAEQSVELIVDKISLLAQSDEDFPIQTKKTTLEFLRTIPHLRHRSNTIKAVMLVRSSISFFIHEYFQKNDFSLVAAPIITSNDGEGAGETFIVDSEDKEPFFGNNVKATLGVTGQLHAEAYALGLQKVYTFAPTFRAENSNTKKHAAEFWMVEPEVAFFTLKELIQMSEEMLKYVIKKVLEKRRDELVFLDTHIKPGLIQSLEDFLESNLEIIEYRKVIEILEKNKVFFEEQNIEFGMDLKTEHERFIAEKYAKGPVGVINYPKKLKAFYMYQNDDNETVAAFDLLVPGIGELVGGSQRENRYEKLEQRIQELNIDQKDIQWYLDLRKYGYSGSAGFGLGLERLVMYITGIDNIRDSIPFPRTPNNLKM.

This sequence belongs to the class-II aminoacyl-tRNA synthetase family. In terms of assembly, homodimer.

The protein localises to the cytoplasm. It carries out the reaction tRNA(Asn) + L-asparagine + ATP = L-asparaginyl-tRNA(Asn) + AMP + diphosphate + H(+). The protein is Asparagine--tRNA ligase of Mycoplasmopsis pulmonis (strain UAB CTIP) (Mycoplasma pulmonis).